The sequence spans 153 residues: Large ribosomal subunit protein uL30 (153 aa).

This sequence belongs to the universal ribosomal protein uL30 family. As to quaternary structure, part of the 50S ribosomal subunit.

The chain is Large ribosomal subunit protein uL30 from Methanosarcina acetivorans (strain ATCC 35395 / DSM 2834 / JCM 12185 / C2A).